The primary structure comprises 323 residues: Beta-ketoacyl-[acyl-carrier-protein] synthase III (323 aa).

Catalysis depends on residues C112 and H248. Residues Q249 to R253 are ACP-binding. Residue N278 is part of the active site.

This sequence belongs to the thiolase-like superfamily. FabH family. As to quaternary structure, homodimer.

It localises to the cytoplasm. The enzyme catalyses malonyl-[ACP] + acetyl-CoA + H(+) = 3-oxobutanoyl-[ACP] + CO2 + CoA. The protein operates within lipid metabolism; fatty acid biosynthesis. In terms of biological role, catalyzes the condensation reaction of fatty acid synthesis by the addition to an acyl acceptor of two carbons from malonyl-ACP. Catalyzes the first condensation reaction which initiates fatty acid synthesis and may therefore play a role in governing the total rate of fatty acid production. Possesses both acetoacetyl-ACP synthase and acetyl transacylase activities. Its substrate specificity determines the biosynthesis of branched-chain and/or straight-chain of fatty acids. The sequence is that of Beta-ketoacyl-[acyl-carrier-protein] synthase III from Streptococcus agalactiae serotype Ia (strain ATCC 27591 / A909 / CDC SS700).